The chain runs to 257 residues: Adenylate kinase (257 aa).

52-57 (GAGKGT) is an ATP binding site. The NMP stretch occupies residues 72–101 (ATGDMLRSQVAKKTELGKEAKKIMDQGGLV). AMP is bound by residues T73, R78, 99–101 (GLV), 128–131 (GFPR), and Q135. The tract at residues 169–206 (GRLVHPASGRSYHKIFNPPKNDMKDDVTGEPLIQRSDD) is LID. ATP contacts are provided by residues R170 and 179–180 (SY). AMP is bound by residues R203 and R214. ATP is bound at residue Q242.

This sequence belongs to the adenylate kinase family. AK2 subfamily. Monomer.

Its subcellular location is the cytoplasm. The protein localises to the cytosol. The protein resides in the mitochondrion intermembrane space. It carries out the reaction AMP + ATP = 2 ADP. Catalyzes the reversible transfer of the terminal phosphate group between ATP and AMP. Plays an important role in cellular energy homeostasis and in adenine nucleotide metabolism. Adenylate kinase activity is critical for regulation of the phosphate utilization and the AMP de novo biosynthesis pathways. The protein is Adenylate kinase (adk1) of Neosartorya fischeri (strain ATCC 1020 / DSM 3700 / CBS 544.65 / FGSC A1164 / JCM 1740 / NRRL 181 / WB 181) (Aspergillus fischerianus).